The chain runs to 224 residues: Germin-like protein 8-8 (224 aa).

Residues 1 to 22 (MASPSFCLLAALLALVSWQAIA) form the signal peptide. Cysteines 32 and 47 form a disulfide. One can recognise a Cupin type-1 domain in the interval 62 to 212 (AMLDTPRKTN…AFQVEKGTID (151 aa)). A glycan (N-linked (GlcNAc...) asparagine) is linked at Asn-76. Positions 109, 111, and 116 each coordinate Mn(2+). Asn-135 carries N-linked (GlcNAc...) asparagine glycosylation. His-157 serves as a coordination point for Mn(2+).

Belongs to the germin family. As to quaternary structure, oligomer (believed to be a pentamer but probably hexamer).

It is found in the secreted. The protein resides in the extracellular space. Its subcellular location is the apoplast. Plays a role in broad-spectrum disease resistance. Probably has no oxalate oxidase activity even if the active site is conserved. The sequence is that of Germin-like protein 8-8 from Oryza sativa subsp. japonica (Rice).